Reading from the N-terminus, the 41-residue chain is Large ribosomal subunit protein bL36 (41 aa).

The protein belongs to the bacterial ribosomal protein bL36 family.

The chain is Large ribosomal subunit protein bL36 from Xanthobacter autotrophicus (strain ATCC BAA-1158 / Py2).